Here is a 226-residue protein sequence, read N- to C-terminus: Leucyl/phenylalanyl-tRNA--protein transferase (226 aa).

It belongs to the L/F-transferase family.

The protein localises to the cytoplasm. It catalyses the reaction N-terminal L-lysyl-[protein] + L-leucyl-tRNA(Leu) = N-terminal L-leucyl-L-lysyl-[protein] + tRNA(Leu) + H(+). The enzyme catalyses N-terminal L-arginyl-[protein] + L-leucyl-tRNA(Leu) = N-terminal L-leucyl-L-arginyl-[protein] + tRNA(Leu) + H(+). It carries out the reaction L-phenylalanyl-tRNA(Phe) + an N-terminal L-alpha-aminoacyl-[protein] = an N-terminal L-phenylalanyl-L-alpha-aminoacyl-[protein] + tRNA(Phe). Functionally, functions in the N-end rule pathway of protein degradation where it conjugates Leu, Phe and, less efficiently, Met from aminoacyl-tRNAs to the N-termini of proteins containing an N-terminal arginine or lysine. In Pseudomonas entomophila (strain L48), this protein is Leucyl/phenylalanyl-tRNA--protein transferase.